The primary structure comprises 96 residues: Myoglobin (96 aa).

Residues 1 to 96 (GLSDGEWQLV…AKTKELGFLG (96 aa)) form the Globin domain. Residue Ser-3 is modified to Phosphoserine. Residue His-61 coordinates nitrite. Residue His-61 participates in O2 binding. Residue Thr-64 is modified to Phosphothreonine.

The protein belongs to the globin family. As to quaternary structure, monomeric.

It is found in the cytoplasm. Its subcellular location is the sarcoplasm. It carries out the reaction Fe(III)-heme b-[protein] + nitric oxide + H2O = Fe(II)-heme b-[protein] + nitrite + 2 H(+). It catalyses the reaction H2O2 + AH2 = A + 2 H2O. Functionally, monomeric heme protein which primary function is to store oxygen and facilitate its diffusion within muscle tissues. Reversibly binds oxygen through a pentacoordinated heme iron and enables its timely and efficient release as needed during periods of heightened demand. Depending on the oxidative conditions of tissues and cells, and in addition to its ability to bind oxygen, it also has a nitrite reductase activity whereby it regulates the production of bioactive nitric oxide. Under stress conditions, like hypoxia and anoxia, it also protects cells against reactive oxygen species thanks to its pseudoperoxidase activity. The protein is Myoglobin (MB) of Ailuropoda melanoleuca (Giant panda).